Consider the following 160-residue polypeptide: Transcriptional repressor NrdR (160 aa).

A zinc finger lies at 3 to 34; the sequence is CPSCQNTDSRVLESRAADGGRSVRRRRECLNC. The region spanning 49 to 139 is the ATP-cone domain; sequence ITVIKRNGNR…VYRQFRGIDD (91 aa).

This sequence belongs to the NrdR family. Zn(2+) serves as cofactor.

In terms of biological role, negatively regulates transcription of bacterial ribonucleotide reductase nrd genes and operons by binding to NrdR-boxes. This is Transcriptional repressor NrdR from Synechococcus sp. (strain CC9605).